Consider the following 332-residue polypeptide: Peroxidase C1C (332 aa).

The N-terminal stretch at 1-9 is a signal peptide; that stretch reads MLHASFSNA. A Pyrrolidone carboxylic acid modification is found at Gln-10. Intrachain disulfides connect Cys-20-Cys-100, Cys-53-Cys-58, Cys-106-Cys-310, and Cys-186-Cys-218. N-linked (GlcNAc...) asparagine glycosylation occurs at Asn-22. His-51 serves as the catalytic Proton acceptor. Ca(2+)-binding residues include Asp-52, Val-55, Gly-57, Asp-59, and Ser-61. Asn-66 carries N-linked (GlcNAc...) asparagine glycosylation. Position 148 (Pro-148) interacts with substrate. His-179 is a binding site for heme b. A Ca(2+)-binding site is contributed by Thr-180. Residues Asn-195, Asn-207, and Asn-223 are each glycosylated (N-linked (GlcNAc...) asparagine). 3 residues coordinate Ca(2+): Asp-231, Thr-234, and Asp-239. A glycan (N-linked (GlcNAc...) asparagine) is linked at Asn-264.

Belongs to the peroxidase family. Classical plant (class III) peroxidase subfamily. Requires Ca(2+) as cofactor. Heme b is required as a cofactor.

The protein resides in the secreted. It is found in the vacuole. It carries out the reaction 2 a phenolic donor + H2O2 = 2 a phenolic radical donor + 2 H2O. Functionally, removal of H(2)O(2), oxidation of toxic reductants, biosynthesis and degradation of lignin, suberization, auxin catabolism, response to environmental stresses such as wounding, pathogen attack and oxidative stress. These functions might be dependent on each isozyme/isoform in each plant tissue. The chain is Peroxidase C1C (PRXC1C) from Armoracia rusticana (Horseradish).